A 641-amino-acid polypeptide reads, in one-letter code: Soluble starch synthase 1, chloroplastic/amyloplastic (641 aa).

Residues Met-1–Ala-113 constitute a chloroplast transit peptide. Residues Thr-62–Pro-96 are disordered. Positions Ser-68 to Pro-87 are enriched in pro residues. ADP-alpha-D-glucose is bound at residue Lys-147.

The protein belongs to the glycosyltransferase 1 family. Bacterial/plant glycogen synthase subfamily. As to expression, leaves and immature seeds.

The protein resides in the plastid. It localises to the chloroplast. It is found in the amyloplast. It catalyses the reaction [(1-&gt;4)-alpha-D-glucosyl](n) + ADP-alpha-D-glucose = [(1-&gt;4)-alpha-D-glucosyl](n+1) + ADP + H(+). Its pathway is glycan biosynthesis; starch biosynthesis. Its function is as follows. Involved in starch synthesis in endosperm amyloplasts. Plays a role in the elongation of amylopectin chains. Synthesizes preferentially amylopectin chains with a degree of polymerization (DP) of 7 to 11 by elongating chains with a DP of 4 to 7. Generates distincly chains with a DP of 8 to 12 chains from short chains with a DP of 6 to 7. This is Soluble starch synthase 1, chloroplastic/amyloplastic from Oryza sativa subsp. japonica (Rice).